We begin with the raw amino-acid sequence, 464 residues long: Bifunctional protein GlmU (464 aa).

Residues 1–232 (MKHDELAAVI…ADEAMGINDR (232 aa)) form a pyrophosphorylase region. Residues 11–14 (LAAG), Lys25, Gln76, and 81–82 (GT) contribute to the UDP-N-acetyl-alpha-D-glucosamine site. Asp106 contributes to the Mg(2+) binding site. Residues Gly143, Glu157, Asn172, and Asn230 each coordinate UDP-N-acetyl-alpha-D-glucosamine. Residue Asn230 participates in Mg(2+) binding. The segment at 233-253 (VQLAQASALMRRRINENLMRA) is linker. The tract at residues 254-464 (GVSFIDPEQT…RHDPKCKNKD (211 aa)) is N-acetyltransferase. The UDP-N-acetyl-alpha-D-glucosamine site is built by Arg336 and Lys354. Catalysis depends on His366, which acts as the Proton acceptor. Residues Tyr369 and Asn380 each contribute to the UDP-N-acetyl-alpha-D-glucosamine site. Acetyl-CoA is bound by residues 389 to 390 (NY), Ser408, Ala426, and Arg443.

This sequence in the N-terminal section; belongs to the N-acetylglucosamine-1-phosphate uridyltransferase family. The protein in the C-terminal section; belongs to the transferase hexapeptide repeat family. As to quaternary structure, homotrimer. Requires Mg(2+) as cofactor.

It localises to the cytoplasm. The catalysed reaction is alpha-D-glucosamine 1-phosphate + acetyl-CoA = N-acetyl-alpha-D-glucosamine 1-phosphate + CoA + H(+). It catalyses the reaction N-acetyl-alpha-D-glucosamine 1-phosphate + UTP + H(+) = UDP-N-acetyl-alpha-D-glucosamine + diphosphate. The protein operates within nucleotide-sugar biosynthesis; UDP-N-acetyl-alpha-D-glucosamine biosynthesis; N-acetyl-alpha-D-glucosamine 1-phosphate from alpha-D-glucosamine 6-phosphate (route II): step 2/2. Its pathway is nucleotide-sugar biosynthesis; UDP-N-acetyl-alpha-D-glucosamine biosynthesis; UDP-N-acetyl-alpha-D-glucosamine from N-acetyl-alpha-D-glucosamine 1-phosphate: step 1/1. It functions in the pathway bacterial outer membrane biogenesis; LPS lipid A biosynthesis. Catalyzes the last two sequential reactions in the de novo biosynthetic pathway for UDP-N-acetylglucosamine (UDP-GlcNAc). The C-terminal domain catalyzes the transfer of acetyl group from acetyl coenzyme A to glucosamine-1-phosphate (GlcN-1-P) to produce N-acetylglucosamine-1-phosphate (GlcNAc-1-P), which is converted into UDP-GlcNAc by the transfer of uridine 5-monophosphate (from uridine 5-triphosphate), a reaction catalyzed by the N-terminal domain. This chain is Bifunctional protein GlmU, found in Syntrophotalea carbinolica (strain DSM 2380 / NBRC 103641 / GraBd1) (Pelobacter carbinolicus).